The sequence spans 449 residues: tRNA-2-methylthio-N(6)-dimethylallyladenosine synthase (449 aa).

Residues 7–124 (DAFYIHTFGC…LPLLIKQVQQ (118 aa)) enclose the MTTase N-terminal domain. The [4Fe-4S] cluster site is built by cysteine 16, cysteine 52, cysteine 87, cysteine 163, cysteine 167, and cysteine 170. The region spanning 149-379 (RSSSMSAFVP…IECQNRISAS (231 aa)) is the Radical SAM core domain. Residues 382-445 (SQAVGSVVEV…SATLLGEPLI (64 aa)) enclose the TRAM domain.

The protein belongs to the methylthiotransferase family. MiaB subfamily. In terms of assembly, monomer. Requires [4Fe-4S] cluster as cofactor.

The protein resides in the cytoplasm. It catalyses the reaction N(6)-dimethylallyladenosine(37) in tRNA + (sulfur carrier)-SH + AH2 + 2 S-adenosyl-L-methionine = 2-methylsulfanyl-N(6)-dimethylallyladenosine(37) in tRNA + (sulfur carrier)-H + 5'-deoxyadenosine + L-methionine + A + S-adenosyl-L-homocysteine + 2 H(+). Functionally, catalyzes the methylthiolation of N6-(dimethylallyl)adenosine (i(6)A), leading to the formation of 2-methylthio-N6-(dimethylallyl)adenosine (ms(2)i(6)A) at position 37 in tRNAs that read codons beginning with uridine. The sequence is that of tRNA-2-methylthio-N(6)-dimethylallyladenosine synthase from Chlorobium chlorochromatii (strain CaD3).